Consider the following 1099-residue polypeptide: Sodium/potassium/calcium exchanger 1 (1099 aa).

At 1–452 the chain is on the extracellular side; sequence MGKLIRMGPQ…DLFSVEERRQ (452 aa). Over residues 123 to 134 the composition is skewed to polar residues; the sequence is PTTTKNNYSPTA. Disordered stretches follow at residues 123 to 150, 169 to 199, and 284 to 304; these read PTTT…SSRT, TPRG…RVGT, and PRRV…KSNP. An N-linked (GlcNAc...) asparagine glycan is attached at asparagine 290. A helical membrane pass occupies residues 453 to 473; the sequence is GWVVLHVFGMMYVFVALAIVC. At 474-497 the chain is on the cytoplasmic side; the sequence is DEYFVPALGVITDKLQISEDVAGA. The Alpha-1 repeat unit spans residues 494–534; the sequence is VAGATFMAAGGSAPELFTSLIGVFISHSNVGIGTIVGSAVF. A helical transmembrane segment spans residues 498–518; the sequence is TFMAAGGSAPELFTSLIGVFI. Residues 519–522 lie on the Extracellular side of the membrane; the sequence is SHSN. Residues 523–543 traverse the membrane as a helical segment; that stretch reads VGIGTIVGSAVFNILFVIGTC. Residues 544 to 563 lie on the Cytoplasmic side of the membrane; it reads SLFSREILNLTWWPLFRDVS. The chain crosses the membrane as a helical span at residues 564 to 584; it reads FYILDLIMLILFFLDSLIAWW. Residue glutamate 585 is a topological domain, extracellular. The chain crosses the membrane as a helical span at residues 586-606; it reads SLLLLLAYAFYVFTMKWNKHI. At 607–907 the chain is on the cytoplasmic side; it reads EVWVKEQLSR…SLDWPETRQK (301 aa). A Phosphoserine modification is found at serine 658. The tract at residues 690–901 is disordered; the sequence is EKEEESLNQG…GNEEPLSLDW (212 aa). Residue threonine 724 is modified to Phosphothreonine. Acidic residues predominate over residues 757–769; it reads PGEEGETAGEGET. Basic and acidic residues-rich tracts occupy residues 813-825 and 835-849; these read EIHA…KGNE and AENH…KGVE. Residues 857-892 show a composition bias toward acidic residues; it reads GDSEEEEEEEEEQEEEEEEEEQEEEEEEEEEEEEKG. The helical transmembrane segment at 908 to 928 threads the bilayer; the sequence is QAIYLFLLPIVFPLWLTVPDV. The Extracellular segment spans residues 929–935; the sequence is RRQESRK. The chain crosses the membrane as a helical span at residues 936–956; sequence FFVFTFLGSIMWIAMFSYLMV. Residues 957–971 are Cytoplasmic-facing; sequence WWAHQVGETIGISEE. A helical transmembrane segment spans residues 972-992; that stretch reads IMGLTILAAGTSIPDLITSVI. One copy of the Alpha-2 repeat lies at 979-1010; the sequence is AAGTSIPDLITSVIVARKGLGDMAVSSSVGSN. Residues 993-1010 are Extracellular-facing; that stretch reads VARKGLGDMAVSSSVGSN. A helical membrane pass occupies residues 1011–1031; sequence IFDITVGLPVPWLLFSLINGL. The Cytoplasmic segment spans residues 1032–1039; it reads QPVPVSSN. Residues 1040–1060 form a helical membrane-spanning segment; the sequence is GLFCAIVLLFLMLLFVISSIA. Residues 1061–1068 lie on the Extracellular side of the membrane; that stretch reads SCKWRMNK. The helical transmembrane segment at 1069–1089 threads the bilayer; that stretch reads ILGFTMFLLYFVFLIISVMLE. The Cytoplasmic segment spans residues 1090–1099; the sequence is DRIISCPVSV.

Belongs to the Ca(2+):cation antiporter (CaCA) (TC 2.A.19) family. SLC24A subfamily. The uncleaved signal sequence is required for efficient membrane targeting and proper membrane integration. As to expression, expressed in the retina, particularly in the inner segment, outer and inner nuclear layers, and ganglion cell layer.

The protein resides in the cell membrane. It carries out the reaction Ca(2+)(out) + K(+)(out) + 4 Na(+)(in) = Ca(2+)(in) + K(+)(in) + 4 Na(+)(out). Functionally, calcium, potassium:sodium antiporter that transports 1 Ca(2+) and 1 K(+) in exchange for 4 Na(+). Critical component of the visual transduction cascade, controlling the calcium concentration of outer segments during light and darkness. Light causes a rapid lowering of cytosolic free calcium in the outer segment of both retinal rod and cone photoreceptors and the light-induced lowering of calcium is caused by extrusion via this protein which plays a key role in the process of light adaptation. The protein is Sodium/potassium/calcium exchanger 1 of Homo sapiens (Human).